The primary structure comprises 832 residues: Golgin subfamily A member 6-like protein 24 (832 aa).

Disordered regions lie at residues 1-107 (MWPQ…QEAL), 303-333 (QEQE…MRRQ), 351-431 (MHEQ…EMWR), 508-652 (QEEM…EQEE), and 664-832 (QEEM…MQEH). Positions 13–27 (LPTHPHLPTHPHLPT) are enriched in basic residues. The segment covering 37–58 (MSKETRQSKLAEAKEQLTDHHP) has biased composition (basic and acidic residues). Composition is skewed to polar residues over residues 59 to 69 (QTNPSVGTAAS) and 77 to 89 (NNGT…TSGG). Basic and acidic residues predominate over residues 92–107 (SPEDEQKASHQHQEAL). Residues 163 to 828 (LEQALSAVAT…EVRLRQQEEK (666 aa)) are a coiled coil. Basic and acidic residues-rich tracts occupy residues 664–684 (QEEM…KMWE) and 692–832 (QEEK…MQEH).

Belongs to the GOLGA6 family.

The polypeptide is Golgin subfamily A member 6-like protein 24 (Homo sapiens (Human)).